A 210-amino-acid polypeptide reads, in one-letter code: Urease accessory protein UreE (210 aa).

Residues 144 to 210 (PEGGAYAAGG…GHAHPHSLAR (67 aa)) form a disordered region. A compositionally biased stretch (basic and acidic residues) spans 156–202 (HGHDHPHHDHGHDHAHAHAHGTEACDHEHSHDHDCGHHHDHGQDYGH).

The protein belongs to the UreE family.

It localises to the cytoplasm. Involved in urease metallocenter assembly. Binds nickel. Probably functions as a nickel donor during metallocenter assembly. This is Urease accessory protein UreE from Paracidovorax citrulli (strain AAC00-1) (Acidovorax citrulli).